We begin with the raw amino-acid sequence, 78 residues long: Large ribosomal subunit protein bL28 (78 aa).

Belongs to the bacterial ribosomal protein bL28 family.

This is Large ribosomal subunit protein bL28 from Microcystis aeruginosa (strain NIES-843 / IAM M-2473).